Consider the following 175-residue polypeptide: MADEFLVVGQVVAAQGLKGEVRILPASDFPQRFTEPGSRWLRRRGHNEQQVQLLSGRQLPGKELFVVRFEGINDRTAAESLVHQEFLVAADDIPELEDGEFHVRDLQGLSVRLDTESDPIGVVVDLHHGGNDLLEIELKADGRRCLVPFVDAIVPQVELEEGWLLITPPKGLLDG.

In terms of domain architecture, PRC barrel spans 98-172 (DGEFHVRDLQ…WLLITPPKGL (75 aa)).

It belongs to the RimM family. As to quaternary structure, binds ribosomal protein uS19.

It localises to the cytoplasm. An accessory protein needed during the final step in the assembly of 30S ribosomal subunit, possibly for assembly of the head region. Essential for efficient processing of 16S rRNA. May be needed both before and after RbfA during the maturation of 16S rRNA. It has affinity for free ribosomal 30S subunits but not for 70S ribosomes. This chain is Ribosome maturation factor RimM, found in Synechococcus sp. (strain RCC307).